The chain runs to 115 residues: CRISPR-associated endoribonuclease Cas2 (115 aa).

D22 lines the Mg(2+) pocket.

It belongs to the CRISPR-associated endoribonuclease Cas2 protein family. As to quaternary structure, homodimer, forms a heterotetramer with a Cas1 homodimer. Mg(2+) serves as cofactor.

Its function is as follows. CRISPR (clustered regularly interspaced short palindromic repeat), is an adaptive immune system that provides protection against mobile genetic elements (viruses, transposable elements and conjugative plasmids). CRISPR clusters contain sequences complementary to antecedent mobile elements and target invading nucleic acids. CRISPR clusters are transcribed and processed into CRISPR RNA (crRNA). Functions as a ssRNA-specific endoribonuclease. Involved in the integration of spacer DNA into the CRISPR cassette. This is CRISPR-associated endoribonuclease Cas2 from Flavobacterium psychrophilum (strain ATCC 49511 / DSM 21280 / CIP 103535 / JIP02/86).